The chain runs to 404 residues: Propionate kinase PduW (404 aa).

Belongs to the acetokinase family. PduW subfamily.

It localises to the cytoplasm. The enzyme catalyses propanoate + ATP = propanoyl phosphate + ADP. Its pathway is polyol metabolism; 1,2-propanediol degradation. It functions in the pathway organic acid metabolism; propanoate degradation. Works with phosphate acetyltransferase (pta) to capture exogenous propionate and regenerate propionyl-CoA during degradation of propionate and 1,2-propanediol (1,2-PD). Ectopic expression partially complements a cobB deletion allowing some growth on propionate. Restores growth to an eutQ deletion on ethanolamine and tetrathionate under anoxic conditions. The chain is Propionate kinase PduW from Salmonella typhimurium (strain LT2 / SGSC1412 / ATCC 700720).